Reading from the N-terminus, the 247-residue chain is Sugar fermentation stimulation protein homolog (247 aa).

Belongs to the SfsA family.

This is Sugar fermentation stimulation protein homolog from Aeromonas hydrophila subsp. hydrophila (strain ATCC 7966 / DSM 30187 / BCRC 13018 / CCUG 14551 / JCM 1027 / KCTC 2358 / NCIMB 9240 / NCTC 8049).